The primary structure comprises 553 residues: Solute carrier family 2, facilitated glucose transporter member 10 (553 aa).

The Cytoplasmic portion of the chain corresponds to 1–15 (MGLRSTTLVLAATSS). Residues 16–36 (LLGGLIFGYELGIISGALLML) form a helical membrane-spanning segment. The Extracellular segment spans residues 37–48 (KTVFQLTCFEQE). Residues 49-69 (ALVSAVLFGALLASLIGGFII) form a helical membrane-spanning segment. The Cytoplasmic segment spans residues 70 to 82 (DRSGRRTSIMGSN). Residues 83–103 (LVVLAGSIILIATSSFWWLVV) traverse the membrane as a helical segment. At 104–105 (GR) the chain is on the extracellular side. Residues 106 to 126 (VTVGFAISISSMACCIYVSEI) form a helical membrane-spanning segment. The Cytoplasmic portion of the chain corresponds to 127–132 (VRPHQR). The chain crosses the membrane as a helical span at residues 133 to 153 (GTLVSLYETGITVGILISYAM). Over 154–165 (NYFLSAVNDGWK) the chain is Extracellular. Residues 166–186 (YMFGLAIIPAAFQFIVILFLP) traverse the membrane as a helical segment. The Cytoplasmic segment spans residues 187–240 (SKPHTLNFWEQDSDNGFIELEEAGESGEFKPDTYDKQYTFLDLFRSKDNMRTRT). A helical transmembrane segment spans residues 241–261 (LLGLGLVLFQQFTGQPNVLYY). Residue 250–251 (QQ) participates in D-glucose binding. Residues 262–277 (ASTIFRSVGFQSNSSA) lie on the Extracellular side of the membrane. Asn274 is a glycosylation site (N-linked (GlcNAc...) asparagine). The helical transmembrane segment at 278-298 (VLASVGLGVVKVASTLIAICF) threads the bilayer. The Cytoplasmic portion of the chain corresponds to 299–305 (ADKAGRR). Residues 306–326 (ILLLAGCIVMTIAISGIGIVS) traverse the membrane as a helical segment. The Extracellular segment spans residues 327–413 (FMVELDSHRD…PPAGPDSNYA (87 aa)). N-linked (GlcNAc...) asparagine glycans are attached at residues Asn344, Asn351, and Asn400. The chain crosses the membrane as a helical span at residues 414-434 (ILNWITLLSMMAFVSAFSIGF). Residues 435–462 (GPMTWLVLSEIYPADIRGRAFAFCNSFN) lie on the Cytoplasmic side of the membrane. Trp439 contributes to the D-glucose binding site. The chain crosses the membrane as a helical span at residues 463 to 482 (WAANLLITLTFLEVIGSIGL). Residue Gly483 is a topological domain, extracellular. A helical transmembrane segment spans residues 484–504 (WTFLLYGGVGLLAIAFIYFFI). Over 505 to 553 (PETKGQSLEEIDQQLSSKRISKRRETSKGVRKRPSTGPPYQRVGKSNWT) the chain is Cytoplasmic. The disordered stretch occupies residues 522–553 (KRISKRRETSKGVRKRPSTGPPYQRVGKSNWT).

The protein belongs to the major facilitator superfamily. Sugar transporter (TC 2.A.1.1) family. Glucose transporter subfamily.

It is found in the endomembrane system. Its subcellular location is the cytoplasm. The protein resides in the perinuclear region. The catalysed reaction is D-glucose(out) = D-glucose(in). Facilitative glucose transporter required for the development of the cardiovascular system. This chain is Solute carrier family 2, facilitated glucose transporter member 10, found in Xenopus laevis (African clawed frog).